Here is a 148-residue protein sequence, read N- to C-terminus: NADPH-dependent 7-cyano-7-deazaguanine reductase (148 aa).

Cysteine 50 acts as the Thioimide intermediate in catalysis. The active-site Proton donor is the aspartate 57. Substrate is bound by residues 72–74 and 91–92; these read VES and HE.

Belongs to the GTP cyclohydrolase I family. QueF type 1 subfamily.

It localises to the cytoplasm. It catalyses the reaction 7-aminomethyl-7-carbaguanine + 2 NADP(+) = 7-cyano-7-deazaguanine + 2 NADPH + 3 H(+). Its pathway is tRNA modification; tRNA-queuosine biosynthesis. Its function is as follows. Catalyzes the NADPH-dependent reduction of 7-cyano-7-deazaguanine (preQ0) to 7-aminomethyl-7-deazaguanine (preQ1). This is NADPH-dependent 7-cyano-7-deazaguanine reductase from Helicobacter pylori (strain ATCC 700392 / 26695) (Campylobacter pylori).